Reading from the N-terminus, the 340-residue chain is Guanine nucleotide-binding protein G(I)/G(S)/G(T) subunit beta-1 (340 aa).

Serine 2 is subject to N-acetylserine. Serine 2 carries the post-translational modification Phosphoserine. WD repeat units follow at residues 46-94 (RTRR…HAIP), 95-140 (LRSS…RELA), 141-181 (GHTG…TTFT), 182-223 (GHTG…QTFT), 224-267 (GHES…YSHD), 268-309 (NIIC…GVLA), and 310-340 (GHDDRVSCLGVTDDGMAVATGSWDSFLKIWN). Histidine 266 carries the phosphohistidine modification.

It belongs to the WD repeat G protein beta family. As to quaternary structure, g proteins are composed of 3 units, alpha, beta and gamma. The heterodimer formed by GNB1 and GNG2 interacts with ARHGEF5. The heterodimer formed by GNB1 and GNG2 interacts with GRK2. Forms a complex with GNAO1 and GNG3. Interacts with ARHGEF18 and RASD2. Forms complexes with TAS2R14 and G-proteins; these complexes play a role in the perception of bitterness. Component of the TAS2R14-GNAI1 complex, consisting of TAS2R14, GNAI1, GNB1 and GNG2. Component of the TAS2R14-GNAT3 complex, consisting of TAS2R14, GNAT3, GNB1 and GNG2. Component of the TAS2R14-GNAS2 complex, consisting of TAS2R14, GNAS2, GNB1 and GNG2. Phosphorylation at His-266 by NDKB contributes to G protein activation by increasing the high energetic phosphate transfer onto GDP.

In terms of biological role, guanine nucleotide-binding proteins (G proteins) are involved as a modulator or transducer in various transmembrane signaling systems. The beta and gamma chains are required for the GTPase activity, for replacement of GDP by GTP, and for G protein-effector interaction. In Pongo abelii (Sumatran orangutan), this protein is Guanine nucleotide-binding protein G(I)/G(S)/G(T) subunit beta-1 (GNB1).